A 352-amino-acid chain; its full sequence is Putative GATA transcription factor 22 (352 aa).

The segment at 27-53 (SLHHHLQQQQQQQQHFHHQASSNPSSL) is disordered. A compositionally biased stretch (low complexity) spans 33–53 (QQQQQQQQHFHHQASSNPSSL). The short motif at 112 to 119 (PKKETRLK) is the Nuclear localization signal element. The tract at residues 163 to 189 (AIITTSDSSKQHTNNDQSSNLSNSERQ) is disordered. The span at 165-189 (ITTSDSSKQHTNNDQSSNLSNSERQ) shows a compositional bias: polar residues. The segment at 195–249 (DCVIRICSDCNTTKTPLWRSGPRGPKSLCNACGIRQRKARRAAMATATATAVSGV) adopts a GATA-type zinc-finger fold.

It belongs to the type IV zinc-finger family. Class B subfamily. As to quaternary structure, forms heterodimers with GATA18. In terms of tissue distribution, expressed predominantly in leaves, and barely in stems, flowers and siliques.

The protein localises to the nucleus. Functionally, transcriptional regulator that specifically binds 5'-GATA-3' or 5'-GAT-3' motifs within gene promoters. Involved in the modulation of chloroplast development, growth and division in a cytokinin-dependent manner. Repressor of the gibberellic acid (GA) signaling pathway that regulates flowering and modulates greening, in a SOC1-dependent manner. Prevents the accumulation of SOC1 during flowering. Promotes chlorophyll biosynthesis throughout the plant, by regulating chlorophyll biosynthetic genes (e.g. HEMA1 and GUN4) and chloroplast localized glutamate synthase (e.g. GLU1). Involved in the regulation of sugar-sensing genes (e.g. HXK1, HXK2, STP13 and PLT6). Regulator of germination, senescence, elongation growth and flowering time. Influences also leaf starch content. The polypeptide is Putative GATA transcription factor 22 (Arabidopsis thaliana (Mouse-ear cress)).